The sequence spans 447 residues: Glutamyl-tRNA reductase (447 aa).

Substrate-binding positions include 45-48 (TCNR), Ser-111, 116-118 (ETE), and Gln-122. The active-site Nucleophile is the Cys-46. 191 to 196 (GTGKYA) contributes to the NADP(+) binding site.

The protein belongs to the glutamyl-tRNA reductase family. In terms of assembly, homodimer.

The catalysed reaction is (S)-4-amino-5-oxopentanoate + tRNA(Glu) + NADP(+) = L-glutamyl-tRNA(Glu) + NADPH + H(+). The protein operates within porphyrin-containing compound metabolism; protoporphyrin-IX biosynthesis; 5-aminolevulinate from L-glutamyl-tRNA(Glu): step 1/2. In terms of biological role, catalyzes the NADPH-dependent reduction of glutamyl-tRNA(Glu) to glutamate 1-semialdehyde (GSA). In Tropheryma whipplei (strain Twist) (Whipple's bacillus), this protein is Glutamyl-tRNA reductase.